We begin with the raw amino-acid sequence, 573 residues long: Probable pectinesterase/pectinesterase inhibitor 41 (573 aa).

An N-terminal signal peptide occupies residues 1–22 (MLSLKLFLVTLFLSLQTLFIAS). A pectinesterase inhibitor 41 region spans residues 25–184 (LLPSNSSSTI…TKLFSVSLAL (160 aa)). N-linked (GlcNAc...) asparagine glycans are attached at residues Asn-29, Asn-119, Asn-173, Asn-264, Asn-268, Asn-281, and Asn-320. Residues 259-557 (VTVNQNGTGN…FTVENFLLGD (299 aa)) form a pectinesterase 41 region. Thr-336 is a substrate binding site. A glycan (N-linked (GlcNAc...) asparagine) is linked at Asn-353. Gln-366 contacts substrate. Residue Asp-389 is the Proton donor; for pectinesterase activity of the active site. Cys-403 and Cys-423 form a disulfide bridge. Asp-410 serves as the catalytic Nucleophile; for pectinesterase activity. Residues Asn-456 and Asn-469 are each glycosylated (N-linked (GlcNAc...) asparagine). Substrate-binding residues include Arg-478 and Trp-480. Residues Asn-520, Asn-541, and Asn-547 are each glycosylated (N-linked (GlcNAc...) asparagine).

It in the N-terminal section; belongs to the PMEI family. This sequence in the C-terminal section; belongs to the pectinesterase family. In terms of tissue distribution, expressed in flowers, siliques, floral stems and rosettes leaves.

Its subcellular location is the secreted. The protein localises to the cell wall. The enzyme catalyses [(1-&gt;4)-alpha-D-galacturonosyl methyl ester](n) + n H2O = [(1-&gt;4)-alpha-D-galacturonosyl](n) + n methanol + n H(+). Its pathway is glycan metabolism; pectin degradation; 2-dehydro-3-deoxy-D-gluconate from pectin: step 1/5. Acts in the modification of cell walls via demethylesterification of cell wall pectin. This is Probable pectinesterase/pectinesterase inhibitor 41 (PME41) from Arabidopsis thaliana (Mouse-ear cress).